Reading from the N-terminus, the 455-residue chain is Dihydrolipoyllysine-residue succinyltransferase component of 2-oxoglutarate dehydrogenase complex, mitochondrial (455 aa).

A mitochondrion-targeting transit peptide spans 1–68 (MLSRSRCVSR…RFFRTTAVCK (68 aa)). One can recognise a Lipoyl-binding domain in the interval 71–145 (VITVKTPAFA…EGGTPLFTLR (75 aa)). At S82 the chain carries Phosphoserine. An N6-lipoyllysine modification is found at K111. Over residues 153 to 173 (KAKPAEAPAAAAPKAEPAVSA) the composition is skewed to low complexity. A disordered region spans residues 153–214 (KAKPAEAPAA…KPTAAPPVAE (62 aa)). At K155 the chain carries N6-acetyllysine. Residues 174–195 (VPPPPAASIPTQMPPVPSPPQP) are compositionally biased toward pro residues. The segment at 221-453 (LRAEHREKMN…AVEDPRVLLL (233 aa)) is catalytic. An N6-acetyllysine mark is found at K269, K274, K275, K279, and K309. Catalysis depends on residues H426 and D430.

Belongs to the 2-oxoacid dehydrogenase family. As to quaternary structure, the 2-oxoglutarate dehydrogenase complex is composed of OGDH (2-oxoglutarate dehydrogenase; E1), DLST (dihydrolipoamide succinyltransferase; E2), DLD (dihydrolipoamide dehydrogenase; E3) and the assembly factor KGD4. It contains multiple copies of the three enzymatic components (E1, E2 and E3). In the nucleus, the 2-oxoglutarate dehydrogenase complex associates with KAT2A. Interacts with ABHD11; this interaction maintains the functional lipoylation of the 2-oxoglutarate dehydrogenase complex. It depends on (R)-lipoate as a cofactor.

The protein localises to the mitochondrion matrix. It localises to the nucleus. It catalyses the reaction N(6)-[(R)-dihydrolipoyl]-L-lysyl-[protein] + succinyl-CoA = N(6)-[(R)-S(8)-succinyldihydrolipoyl]-L-lysyl-[protein] + CoA. It functions in the pathway amino-acid degradation; L-lysine degradation via saccharopine pathway; glutaryl-CoA from L-lysine: step 6/6. Its pathway is carbohydrate metabolism; tricarboxylic acid cycle. In terms of biological role, dihydrolipoamide succinyltransferase (E2) component of the 2-oxoglutarate dehydrogenase complex. The 2-oxoglutarate dehydrogenase complex catalyzes the overall conversion of 2-oxoglutarate to succinyl-CoA and CO(2). The 2-oxoglutarate dehydrogenase complex is mainly active in the mitochondrion. A fraction of the 2-oxoglutarate dehydrogenase complex also localizes in the nucleus and is required for lysine succinylation of histones: associates with KAT2A on chromatin and provides succinyl-CoA to histone succinyltransferase KAT2A. The protein is Dihydrolipoyllysine-residue succinyltransferase component of 2-oxoglutarate dehydrogenase complex, mitochondrial of Sus scrofa (Pig).